The chain runs to 396 residues: S-adenosylmethionine synthase (396 aa).

E11 contributes to the Mg(2+) binding site. Position 17 (H17) interacts with ATP. E45 provides a ligand contact to K(+). 2 residues coordinate L-methionine: E58 and Q101. ATP is bound by residues 169–171 (DGK), 237–240 (SGRF), D248, 254–255 (RK), A271, K275, and K279. D248 serves as a coordination point for L-methionine. Residue K279 coordinates L-methionine.

The protein belongs to the AdoMet synthase family. Homotetramer. Mn(2+) is required as a cofactor. Requires Mg(2+) as cofactor. Co(2+) serves as cofactor. The cofactor is K(+).

The protein resides in the cytoplasm. The enzyme catalyses L-methionine + ATP + H2O = S-adenosyl-L-methionine + phosphate + diphosphate. Its pathway is amino-acid biosynthesis; S-adenosyl-L-methionine biosynthesis; S-adenosyl-L-methionine from L-methionine: step 1/1. Its function is as follows. Catalyzes the formation of S-adenosylmethionine from methionine and ATP. The reaction comprises two steps that are both catalyzed by the same enzyme: formation of S-adenosylmethionine (AdoMet) and triphosphate, and subsequent hydrolysis of the triphosphate. This Medicago sativa subsp. falcata (Sickle medic) protein is S-adenosylmethionine synthase (SAMS).